We begin with the raw amino-acid sequence, 751 residues long: Putative tyrosine-protein kinase EpsB (751 aa).

The Cytoplasmic segment spans residues 1 to 31 (MTQNLSQPPAVNAPESELDLVRYLDVLVANR). Residues 32–52 (WLIAGIAAVVMLLGATYAFLA) form a helical membrane-spanning segment. The Periplasmic segment spans residues 53–444 (RPVYEADVLV…VPEEPVKPKK (392 aa)). A helical membrane pass occupies residues 445 to 465 (LTVTALAGVLGVVLGVVAAFV). Residues 466-751 (RNTLFGGITE…PSAEAEAESA (286 aa)) are Cytoplasmic-facing.

This sequence belongs to the etk/wzc family.

It is found in the cell inner membrane. It catalyses the reaction L-tyrosyl-[protein] + ATP = O-phospho-L-tyrosyl-[protein] + ADP + H(+). Functionally, probably involved in polymerization and/or export of exopolysaccharide EPS I which functions as a virulence factor. May be involved in an ATP-dependent process in the pathway for EPS I production, possibly export of the trimeric repeat units across the inner membrane or their polymerization. In Ralstonia nicotianae (strain ATCC BAA-1114 / GMI1000) (Ralstonia solanacearum), this protein is Putative tyrosine-protein kinase EpsB (epsB).